A 175-amino-acid chain; its full sequence is Glycine-rich RNA-binding protein 1 (175 aa).

Positions 3–81 (AKVYVGNLSW…RRIRVNMANS (79 aa)) constitute an RRM domain. Residues 114–175 (GQPGGFQQPG…GYGGYNGQSQ (62 aa)) are disordered. A compositionally biased stretch (low complexity) spans 122-131 (PGGFQQQGGY). Residues 132–141 (PQQGGYGGYQ) are compositionally biased toward gly residues. The segment covering 142–162 (QPGFQPQQGGYGAPQQGYGAP) has biased composition (low complexity). Gly residues predominate over residues 163–175 (QQGGYGGYNGQSQ).

Belongs to the glycine-rich RNA-binding protein family. As to quaternary structure, part of large ribonucleoprotein complexes (mRNPs) containing RNA-binding proteins RRM4 and PAB1, endosome-binding protein UPA1, core scaffold protein UPA2 and associated factor GRP1.

The protein localises to the endosome. In terms of biological role, component of endosomal mRNA transport that regulates polarity of the infectious hyphae by transporting a broad spectrum of cargo mRNAs from the nucleus to cell poles. In Mycosarcoma maydis (Corn smut fungus), this protein is Glycine-rich RNA-binding protein 1.